The following is a 417-amino-acid chain: Zinc finger protein CONSTANS-LIKE 16 (417 aa).

4 residues coordinate Zn(2+): cysteine 17, cysteine 20, cysteine 40, and histidine 45. The B box-type; atypical zinc finger occupies 17–59 (CDSCVKRRARWYCAADDAFLCQSCDSLVHSANPLARRHERVRL). The tract at residues 63-105 (SPAVVKHSNHSSASPPHEVATWHHGFTRKARTPRGSGKKNNSS) is disordered. Residues 212–239 (LSNSEMFKIEKDEIEEEVEEIKAMSMDI) are a coiled coil. Residues 361–403 (REARVSRYREKRRTRLFSKKIRYEVRKLNAEKRPRMKGRFVKR) enclose the CCT domain.

It belongs to the CONSTANS family.

It localises to the nucleus. The protein is Zinc finger protein CONSTANS-LIKE 16 (COL16) of Arabidopsis thaliana (Mouse-ear cress).